Reading from the N-terminus, the 154-residue chain is MKTGDTVADFELPDQTGTPRRLSVLLSDGPVVLFFYPAAMTPGCTKEACHFRDLAKEFAEVRASRVGISTDPVRKQAKFAEVRRFDYPLLSDAQGTVAAQFGVKRGLLGKLMPVKRTTFVIDTDRKVLDVISSEFSMDAHADKALATLRAIRSG.

One can recognise a Thioredoxin domain in the interval 1–153 (MKTGDTVADF…ALATLRAIRS (153 aa)). The active-site Cysteine sulfenic acid (-SOH) intermediate is Cys-44. Residues Cys-44 and Cys-49 are joined by a disulfide bond.

The protein belongs to the peroxiredoxin family. BCP/PrxQ subfamily. Monomer.

It catalyses the reaction a hydroperoxide + [thioredoxin]-dithiol = an alcohol + [thioredoxin]-disulfide + H2O. Functionally, thiol-specific peroxidase that catalyzes the reduction of hydrogen peroxide and organic hydroperoxides to water and alcohols, respectively. Plays a role in cell protection against oxidative stress by detoxifying peroxides and as sensor of hydrogen peroxide-mediated signaling events. This Mycobacterium tuberculosis (strain CDC 1551 / Oshkosh) protein is Putative peroxiredoxin MT1643 (bcpB).